The primary structure comprises 647 residues: MNAHVEQLEFQAEARQLLDLMVHSVYSNKDAFLRELISNASDALDKLRIEALRNKDLEVDTSDLHIEIDADKAARTLTVRDNGIGMAREEVVDLIGTLAKSGTAELRAQLREAKNAAASEELIGQFGIGFYSSFMVADKVQLLTRKAGESAATRWESSGEGTYTIESVEDAPQGTSVTLHLKPEDAEDDLHDYTSEWKIRNLVKKYSDFIAWPIRMDVERRTPASQEEGGEGGEETVTIETETLNSMKALWARPKEEVSEQEYKEFYKHVAHAWDDPLEIIAMKAEGTFEYQALLFIPSHAPFDLFDRDAHVGIQLYVKRVFIMGDCDQLMPEYLRFVKGVVDAQDMSLNVSREILQQDRQIKAIRRRLTKKVLSTIKDVQSSRPEDYRTFWTQFGRVLKEGLLSDIDNRETLLGISSFVSTYSEEEPTTLAEYVERMKDGQQQIFYATGETRQQLLKSPHLEAFKAKGYEVLLLTDPVDEVWVGMVPEFDGKPLQSVAKGEVDLSSEEDTSEAEREERQKEFADLLTWLQETLSDHVKEVRLSTRLTESPACLITDAFGMTPALARIYRASGQEVPVGKRILELNPSHPLVTGLRQAHQDRADDAEKSLAETAELLYGTALLAEGGALEDPARFAELLAERLARTL.

The tract at residues 1–353 (MNAHVEQLEF…AQDMSLNVSR (353 aa)) is a; substrate-binding. Residues 354-567 (EILQQDRQIK…AFGMTPALAR (214 aa)) are b. The segment at 568–647 (IYRASGQEVP…LLAERLARTL (80 aa)) is c.

It belongs to the heat shock protein 90 family. In terms of assembly, homodimer.

The protein localises to the cytoplasm. In terms of biological role, molecular chaperone. Has ATPase activity. In Mycobacterium bovis (strain ATCC BAA-935 / AF2122/97), this protein is Chaperone protein HtpG.